Consider the following 380-residue polypeptide: Cytochrome b (380 aa).

The next 4 helical transmembrane spans lie at 34–54, 78–99, 114–134, and 179–199; these read FGSLLGICLLTQILTGLLLAT, WLIRNLHANGASFFFICIYLHI, WNTGVILLLTLMATAFVGYVL, and FFALHFLLPFMIAGLALIHLT. Heme b contacts are provided by His84 and His98. 2 residues coordinate heme b: His183 and His197. A ubiquinone is bound at residue His202. The next 4 helical transmembrane spans lie at 227–247, 289–309, 321–341, and 348–368; these read LKDILGFIIMFLPLTTLALFS, LGGVLALAASVLVLFLTPLLH, LSQLLFWTLVTNLCILTWVGS, and FIIIGQLASLTYFTILLLLFP.

This sequence belongs to the cytochrome b family. As to quaternary structure, the cytochrome bc1 complex contains 11 subunits: 3 respiratory subunits (MT-CYB, CYC1 and UQCRFS1), 2 core proteins (UQCRC1 and UQCRC2) and 6 low-molecular weight proteins (UQCRH/QCR6, UQCRB/QCR7, UQCRQ/QCR8, UQCR10/QCR9, UQCR11/QCR10 and a cleavage product of UQCRFS1). This cytochrome bc1 complex then forms a dimer. The cofactor is heme b.

The protein resides in the mitochondrion inner membrane. Functionally, component of the ubiquinol-cytochrome c reductase complex (complex III or cytochrome b-c1 complex) that is part of the mitochondrial respiratory chain. The b-c1 complex mediates electron transfer from ubiquinol to cytochrome c. Contributes to the generation of a proton gradient across the mitochondrial membrane that is then used for ATP synthesis. The protein is Cytochrome b (MT-CYB) of Cepphus grylle (Black guillemot).